Here is a 272-residue protein sequence, read N- to C-terminus: Tryptophan synthase alpha chain (272 aa).

Catalysis depends on proton acceptor residues E49 and D60.

It belongs to the TrpA family. As to quaternary structure, tetramer of two alpha and two beta chains.

It carries out the reaction (1S,2R)-1-C-(indol-3-yl)glycerol 3-phosphate + L-serine = D-glyceraldehyde 3-phosphate + L-tryptophan + H2O. Its pathway is amino-acid biosynthesis; L-tryptophan biosynthesis; L-tryptophan from chorismate: step 5/5. Its function is as follows. The alpha subunit is responsible for the aldol cleavage of indoleglycerol phosphate to indole and glyceraldehyde 3-phosphate. The sequence is that of Tryptophan synthase alpha chain from Acidithiobacillus ferrooxidans (strain ATCC 23270 / DSM 14882 / CIP 104768 / NCIMB 8455) (Ferrobacillus ferrooxidans (strain ATCC 23270)).